Reading from the N-terminus, the 124-residue chain is Large ribosomal subunit protein bL36m (124 aa).

The protein belongs to the bacterial ribosomal protein bL36 family. In terms of assembly, component of the mitochondrial large ribosomal subunit (mt-LSU). Mature N.crassa 74S mitochondrial ribosomes consist of a small (37S) and a large (54S) subunit. The 37S small subunit contains a 16S ribosomal RNA (16S mt-rRNA) and 32 different proteins. The 54S large subunit contains a 23S rRNA (23S mt-rRNA) and 42 different proteins. bL36m has a zinc binding site.

The protein localises to the mitochondrion. Functionally, component of the mitochondrial ribosome (mitoribosome), a dedicated translation machinery responsible for the synthesis of mitochondrial genome-encoded proteins, including at least some of the essential transmembrane subunits of the mitochondrial respiratory chain. The mitoribosomes are attached to the mitochondrial inner membrane and translation products are cotranslationally integrated into the membrane. This chain is Large ribosomal subunit protein bL36m (rtc6), found in Neurospora crassa (strain ATCC 24698 / 74-OR23-1A / CBS 708.71 / DSM 1257 / FGSC 987).